Reading from the N-terminus, the 343-residue chain is Methionine import ATP-binding protein MetN (343 aa).

The ABC transporter domain maps to 2–241 (IKLSNITKVF…PKTPLAQKFI (240 aa)). 38-45 (GASGAGKS) provides a ligand contact to ATP.

This sequence belongs to the ABC transporter superfamily. Methionine importer (TC 3.A.1.24) family. As to quaternary structure, the complex is composed of two ATP-binding proteins (MetN), two transmembrane proteins (MetI) and a solute-binding protein (MetQ).

It localises to the cell inner membrane. It carries out the reaction L-methionine(out) + ATP + H2O = L-methionine(in) + ADP + phosphate + H(+). The catalysed reaction is D-methionine(out) + ATP + H2O = D-methionine(in) + ADP + phosphate + H(+). Part of the ABC transporter complex MetNIQ involved in methionine import. Responsible for energy coupling to the transport system. This chain is Methionine import ATP-binding protein MetN, found in Shigella boydii serotype 4 (strain Sb227).